The following is a 355-amino-acid chain: Green-sensitive opsin-1 (355 aa).

Over 1 to 49 (MAAHADEPVFAARRYNEETTRESAFVYTNANNTRDPFEGPNYHIAPRWV) the chain is Extracellular. Asn31 carries N-linked (GlcNAc...) asparagine glycosylation. The chain crosses the membrane as a helical span at residues 50–74 (YNLASLWMIIVVIASIFTNSLVIVA). Topologically, residues 75–86 (TAKFKKLRHPLN) are cytoplasmic. Residues 87 to 112 (WILVNLAIADLGETVLASTISVFNQV) traverse the membrane as a helical segment. Topologically, residues 113–126 (FGYFVLGHPMCIFE) are extracellular. Cysteines 123 and 200 form a disulfide. A helical transmembrane segment spans residues 127–146 (GWTVSVCGITALWSLTIISW). Over 147-165 (ERWVVVCKPFGNVKFDGKW) the chain is Cytoplasmic. The helical transmembrane segment at 166–189 (AAGGIIFAWTWAIIWCTPPIFGWS) threads the bilayer. Topologically, residues 190–215 (RYWPHGLKTSCGPDVFSGSEDPGVAS) are extracellular. The chain crosses the membrane as a helical span at residues 216–243 (YMVTLLLTCCILPLSVIIICYIFVWNAI). Residues 244-265 (HQVAQQQKDSESTQKAEKEVSR) lie on the Cytoplasmic side of the membrane. A helical transmembrane segment spans residues 266–289 (MVVVMILAFILCWGPYASFATFSA). At 290–297 (LNPGYAWH) the chain is on the extracellular side. Residues 298–322 (PLAAALPAYFAKSATIYNPIIYVFM) traverse the membrane as a helical segment. Lys309 bears the N6-(retinylidene)lysine mark. Residues 323-355 (NRQFRSCIMQLFGKKVEDASEVSGSTTEVSTAS) are Cytoplasmic-facing.

This sequence belongs to the G-protein coupled receptor 1 family. Opsin subfamily. In terms of tissue distribution, the color pigments are found in the cone photoreceptor cells.

It is found in the membrane. Functionally, visual pigments are the light-absorbing molecules that mediate vision. They consist of an apoprotein, opsin, covalently linked to cis-retinal. The sequence is that of Green-sensitive opsin-1 (G103) from Psalidodon fasciatus (Banded astyanax).